We begin with the raw amino-acid sequence, 159 residues long: NAD(P)H-quinone oxidoreductase subunit N (159 aa).

Belongs to the complex I NdhN subunit family. NDH-1 can be composed of about 15 different subunits; different subcomplexes with different compositions have been identified which probably have different functions.

It localises to the cell inner membrane. The catalysed reaction is a plastoquinone + NADH + (n+1) H(+)(in) = a plastoquinol + NAD(+) + n H(+)(out). The enzyme catalyses a plastoquinone + NADPH + (n+1) H(+)(in) = a plastoquinol + NADP(+) + n H(+)(out). In terms of biological role, NDH-1 shuttles electrons from an unknown electron donor, via FMN and iron-sulfur (Fe-S) centers, to quinones in the respiratory and/or the photosynthetic chain. The immediate electron acceptor for the enzyme in this species is believed to be plastoquinone. Couples the redox reaction to proton translocation, and thus conserves the redox energy in a proton gradient. Cyanobacterial NDH-1 also plays a role in inorganic carbon-concentration. This Gloeobacter violaceus (strain ATCC 29082 / PCC 7421) protein is NAD(P)H-quinone oxidoreductase subunit N.